Consider the following 1035-residue polypeptide: FERM domain-containing protein 4B (1035 aa).

In terms of domain architecture, FERM spans 59-361; the sequence is RHCQVHLLDD…SQHQFYLDRK (303 aa). Serine 372 is modified (phosphoserine). 2 coiled-coil regions span residues 414–451 and 535–559; these read QDSE…LKKI and KQDY…RIRC. Positions 542–972 are necessary for adherens junction and tight junction localization; that stretch reads VKRLQEIENS…TQLTIGLSEY (431 aa). Disordered regions lie at residues 563–615, 631–699, 713–738, and 754–798; these read PSQK…ILPP, NEQF…LESQ, FTLS…SQSS, and TQTL…SKGQ. Positions 571-590 are enriched in low complexity; sequence PPEDIIPSESSSLSDTTTYD. Residues 594–607 are compositionally biased toward polar residues; sequence DSFTLAGQRPSSVP. A Phosphoserine modification is found at serine 609. The segment covering 635 to 644 has biased composition (basic and acidic residues); that stretch reads MDTRHSREML. 2 stretches are compositionally biased toward polar residues: residues 664–699 and 715–725; these read MPTT…LESQ and LSKSQRSSSTE. Position 698 is a phosphoserine (serine 698). The span at 762–771 shows a compositional bias: basic residues; it reads RGRRRSKKHS. Residues 772-782 are compositionally biased toward polar residues; that stretch reads VSTSNSGSMPN. Lysine 883 is covalently cross-linked (Glycyl lysine isopeptide (Lys-Gly) (interchain with G-Cter in SUMO2)). Disordered regions lie at residues 906–926, 939–958, and 994–1035; these read RASG…SDRG, PCSP…TNAS, and PSRQ…GTLV. Polar residues predominate over residues 907 to 921; sequence ASGQKDQGHSPQTSF. A Phosphoserine modification is found at serine 916. Residues 941–958 are compositionally biased toward low complexity; it reads SPSSRASSYSSVSSTNAS. Over residues 1019–1035 the composition is skewed to basic and acidic residues; it reads SEQRLFWHEDSKPGTLV. Lysine 1030 is covalently cross-linked (Glycyl lysine isopeptide (Lys-Gly) (interchain with G-Cter in SUMO2)).

Interacts with CYTH3. Interacts with PARD3. Interacts with CYTH1. In terms of tissue distribution, isoform 1 is expressed in the brain. Isoform 2 is expressed in the lung (at protein level).

Its subcellular location is the cytoplasm. It is found in the cytoskeleton. The protein localises to the cell junction. The protein resides in the tight junction. It localises to the adherens junction. Its function is as follows. Member of GRP1 signaling complexes that are acutely recruited to plasma membrane ruffles in response to insulin receptor signaling. May function as a scaffolding protein that regulates epithelial cell polarity by connecting ARF6 activation with the PAR3 complex. Plays a redundant role with FRMD4A in epithelial polarization. The protein is FERM domain-containing protein 4B (Frmd4b) of Mus musculus (Mouse).